A 749-amino-acid chain; its full sequence is 5-methyltetrahydropteroyltriglutamate--homocysteine methyltransferase (749 aa).

Residues 15–18 (RELK) and Lys114 each bind 5-methyltetrahydropteroyltri-L-glutamate. L-homocysteine-binding positions include 425–427 (IGS) and Glu478. L-methionine-binding positions include 425 to 427 (IGS) and Glu478. Trp555 contacts 5-methyltetrahydropteroyltri-L-glutamate. An L-homocysteine-binding site is contributed by Asp593. L-methionine is bound at residue Asp593. Residue Glu599 participates in 5-methyltetrahydropteroyltri-L-glutamate binding. 3 residues coordinate Zn(2+): His636, Cys638, and Glu660. Residue His689 is the Proton donor of the active site. Position 721 (Cys721) interacts with Zn(2+).

It belongs to the vitamin-B12 independent methionine synthase family. Requires Zn(2+) as cofactor.

The catalysed reaction is 5-methyltetrahydropteroyltri-L-glutamate + L-homocysteine = tetrahydropteroyltri-L-glutamate + L-methionine. It functions in the pathway amino-acid biosynthesis; L-methionine biosynthesis via de novo pathway; L-methionine from L-homocysteine (MetE route): step 1/1. Catalyzes the transfer of a methyl group from 5-methyltetrahydrofolate to homocysteine resulting in methionine formation. The chain is 5-methyltetrahydropteroyltriglutamate--homocysteine methyltransferase from Streptococcus pneumoniae serotype 4 (strain ATCC BAA-334 / TIGR4).